We begin with the raw amino-acid sequence, 746 residues long: NAD(P)H-quinone oxidoreductase subunit 5, chloroplastic (746 aa).

16 helical membrane-spanning segments follow: residues 9-29 (YIIL…LLFV), 40-60 (WAFV…NLAI), 88-108 (LIDP…IMVL), 125-145 (FAYM…SNLI), 147-167 (IHIF…FWFT), 185-205 (GDFG…SLEF), 225-245 (FAIL…AQFP), 258-278 (TPIS…FLVA), 283-303 (LFIV…ITLL), 327-347 (LGYI…FHLI), 354-374 (ALLF…VGYS), 396-416 (TTFL…CFWS), 425-445 (WLYS…TAFY), 554-574 (LFPL…GIPF), 610-630 (IFSV…YGSV), and 726-746 (YLFL…YFDF).

This sequence belongs to the complex I subunit 5 family. NDH is composed of at least 16 different subunits, 5 of which are encoded in the nucleus.

It is found in the plastid. It localises to the chloroplast thylakoid membrane. It catalyses the reaction a plastoquinone + NADH + (n+1) H(+)(in) = a plastoquinol + NAD(+) + n H(+)(out). It carries out the reaction a plastoquinone + NADPH + (n+1) H(+)(in) = a plastoquinol + NADP(+) + n H(+)(out). NDH shuttles electrons from NAD(P)H:plastoquinone, via FMN and iron-sulfur (Fe-S) centers, to quinones in the photosynthetic chain and possibly in a chloroplast respiratory chain. The immediate electron acceptor for the enzyme in this species is believed to be plastoquinone. Couples the redox reaction to proton translocation, and thus conserves the redox energy in a proton gradient. This Dioscorea elephantipes (Elephant's foot yam) protein is NAD(P)H-quinone oxidoreductase subunit 5, chloroplastic (ndhF).